We begin with the raw amino-acid sequence, 400 residues long: F-box/LRR-repeat protein 14 (400 aa).

Positions 2-48 (ETHISCLFPELLAMIFGYLDVRDKGRAAQVCTAWRDAAYHKSVWRGV) constitute an F-box domain. Residues 2 to 48 (ETHISCLFPELLAMIFGYLDVRDKGRAAQVCTAWRDAAYHKSVWRGV) are required for down-regulation of SNAI1. LRR repeat units lie at residues 144–163 (GLEV…GLLL), 170–191 (RLKS…GHLA), 203–225 (GLEQ…HISR), 229–250 (GLRL…LHLS), and 254–275 (SLRS…MHLA).

As to quaternary structure, part of a SCF (SKP1-cullin-F-box) ubiquitin-protein ligase complex. Interacts with SKP1 and CUL1. Interacts with SNAI1; the interaction requires the phosphorylation of the two serine residues in the substrate destruction motif D-S-G-X(2,3,4)-S.

The protein localises to the cytoplasm. Functionally, substrate-recognition component of some SCF (SKP1-CUL1-F-box protein)-type E3 ubiquitin-protein ligase complexes. The SCF(FBXL14) complex acts by mediating ubiquitination and subsequent degradation of SNAI1. This is F-box/LRR-repeat protein 14 (FBXL14) from Bos taurus (Bovine).